The chain runs to 328 residues: PDZ and LIM domain protein 1 (328 aa).

At T2 the chain carries N-acetylthreonine. The 83-residue stretch at T3–E85 folds into the PDZ domain. Phosphoserine is present on residues S90 and S130. Y144 carries the phosphotyrosine modification. Positions P257–P316 constitute an LIM zinc-binding domain. Zn(2+) contacts are provided by C259, C262, H279, C282, C285, C288, C306, and H309. T315 is modified (phosphothreonine). Position 320 is a phosphotyrosine (Y320).

In terms of assembly, interacts with ACTN1, ACTN2 and ACTN4. Interacts with PDLIM4.

Its subcellular location is the cytoplasm. The protein localises to the cytoskeleton. It localises to the myofibril. It is found in the sarcomere. The protein resides in the z line. Cytoskeletal protein that may act as an adapter that brings other proteins (like kinases) to the cytoskeleton. Involved in assembly, disassembly and directioning of stress fibers in fibroblasts. Required for the localization of ACTN1 and PALLD to stress fibers. Required for cell migration and in maintaining cell polarity of fibroblasts. The polypeptide is PDZ and LIM domain protein 1 (PDLIM1) (Bos taurus (Bovine)).